The primary structure comprises 374 residues: Putative 2,3-diketo-5-methylthiopentyl-1-phosphate enolase (374 aa).

Substrate contacts are provided by residues Lys138, 164 to 167 (QDDE), His255, Gly327, and 349 to 350 (GG). Asp166 contacts Mg(2+).

It belongs to the RuBisCO large chain family. Type IV subfamily. In terms of assembly, homodimer. It depends on Mg(2+) as a cofactor.

The catalysed reaction is 5-methylsulfanyl-2,3-dioxopentyl phosphate = 2-hydroxy-5-methylsulfanyl-3-oxopent-1-enyl phosphate. Its pathway is amino-acid biosynthesis; L-methionine biosynthesis via salvage pathway; L-methionine from S-methyl-5-thio-alpha-D-ribose 1-phosphate: step 3/6. Catalyzes the enolization of 2,3-diketo-5-methylthiopentyl-1-phosphate (DK-MTP-1-P) into 2-hydroxy-3-keto-5-methylthiopentenyl-1-phosphate (HK-MTPenyl-1-P). In Shouchella clausii (strain KSM-K16) (Alkalihalobacillus clausii), this protein is Putative 2,3-diketo-5-methylthiopentyl-1-phosphate enolase (mtnW).